The chain runs to 352 residues: Divinyl chlorophyll a/b light-harvesting protein PcbH (352 aa).

The next 6 membrane-spanning stretches (helical) occupy residues 27–47 (FIGSHVGHTGIICFATGASCL), 88–108 (VATIAIFHLIFSMVYGGAGLA), 140–160 (FILGHHLIFLGVANIWFVEWA), 202–222 (VMSGHAFLAFLQISGGAFHIA), 242–262 (AVLSWSLAGLFLMGVVAAFWA), and 309–329 (LVNVQYYFAFFCLQGHLWHAL).

Belongs to the PsbB/PsbC family. IsiA/Pcb subfamily. As to quaternary structure, the antenna complex consists of divinyl chlorophylls (a and b) and divinyl chlorophyll a/b binding proteins and binds more divinyl chlorophyll b than does the antenna complex from high-light-adapted Prochlorococcus. It depends on divinyl chlorophyll a as a cofactor. Requires divinyl chlorophyll b as cofactor.

Its subcellular location is the cellular thylakoid membrane. The antenna complex functions as a light receptor, it captures and delivers excitation energy to photosystems II and I. The Prochlorales pcb genes are not related to higher plant LHCs. In Prochlorococcus marinus (strain SARG / CCMP1375 / SS120), this protein is Divinyl chlorophyll a/b light-harvesting protein PcbH (pcbH).